A 406-amino-acid chain; its full sequence is Nicotinate phosphoribosyltransferase (406 aa).

Histidine 225 carries the post-translational modification Phosphohistidine; by autocatalysis.

Belongs to the NAPRTase family. Transiently phosphorylated on a His residue during the reaction cycle. Phosphorylation strongly increases the affinity for substrates and increases the rate of nicotinate D-ribonucleotide production. Dephosphorylation regenerates the low-affinity form of the enzyme, leading to product release.

It carries out the reaction nicotinate + 5-phospho-alpha-D-ribose 1-diphosphate + ATP + H2O = nicotinate beta-D-ribonucleotide + ADP + phosphate + diphosphate. The protein operates within cofactor biosynthesis; NAD(+) biosynthesis; nicotinate D-ribonucleotide from nicotinate: step 1/1. Catalyzes the synthesis of beta-nicotinate D-ribonucleotide from nicotinate and 5-phospho-D-ribose 1-phosphate at the expense of ATP. In Psychromonas ingrahamii (strain DSM 17664 / CCUG 51855 / 37), this protein is Nicotinate phosphoribosyltransferase.